A 94-amino-acid chain; its full sequence is Phosphoribosyl-ATP pyrophosphatase (94 aa).

Belongs to the PRA-PH family.

Its subcellular location is the cytoplasm. It carries out the reaction 1-(5-phospho-beta-D-ribosyl)-ATP + H2O = 1-(5-phospho-beta-D-ribosyl)-5'-AMP + diphosphate + H(+). Its pathway is amino-acid biosynthesis; L-histidine biosynthesis; L-histidine from 5-phospho-alpha-D-ribose 1-diphosphate: step 2/9. This is Phosphoribosyl-ATP pyrophosphatase from Pyrobaculum islandicum (strain DSM 4184 / JCM 9189 / GEO3).